The following is a 493-amino-acid chain: MSELTSLTIAEARRKLRAKEITALELTEAYISAIDAANGHLNAYIKVTPDLARLMAKNSDERIAAGKAGDLEGIPLGIKDLFATVGVHTQACSHILDGFEPRYESTVTQNLWDDGAVMLGKLNMDEFAMGSSNETSHYGAVINPWRAAGSNQQLVPGGSSGGSAAAVAAHLCAGATATDTGGSIRQPAAFTGTVGIKPTYGRCSRWGTVAFASSLDQAGPIARDVRDAAILLKSMASVDAKDTTSVDLPVPDYEAALGQSLKGMKIGIPSEYRVDGMPEEIETLWRQGIAWLKDAGAEIVDISLPHTKYALPAYYIVAPAEASSNLARYDGVRYGLRVDGKDIVDMYEKTRAAGFGKEVKRRIMIGTYVLSAGYYDAYYIRAQKVRTLIKRDFELAFNAGVDAILTPATPSSAFGVADENLASDPVKMYLNDIFTVTVNMAGLPGIAVPAGLDQKGLPLGLQLIGKPFDEETLFKTAHVIEQAAGRFTPARWW.

Residues K79 and S159 each act as charge relay system in the active site. The Acyl-ester intermediate role is filled by S183.

Belongs to the amidase family. GatA subfamily. Heterotrimer of A, B and C subunits.

It carries out the reaction L-glutamyl-tRNA(Gln) + L-glutamine + ATP + H2O = L-glutaminyl-tRNA(Gln) + L-glutamate + ADP + phosphate + H(+). In terms of biological role, allows the formation of correctly charged Gln-tRNA(Gln) through the transamidation of misacylated Glu-tRNA(Gln) in organisms which lack glutaminyl-tRNA synthetase. The reaction takes place in the presence of glutamine and ATP through an activated gamma-phospho-Glu-tRNA(Gln). In Rhizobium leguminosarum bv. trifolii (strain WSM2304), this protein is Glutamyl-tRNA(Gln) amidotransferase subunit A.